The chain runs to 533 residues: Retinoid isomerohydrolase (533 aa).

Ser2 bears the N-acetylserine mark. Cys112 is lipidated: S-palmitoyl cysteine; in membrane form. A Fe cation-binding site is contributed by His180. Residue Cys231 is the site of S-palmitoyl cysteine; in membrane form attachment. 2 residues coordinate Fe cation: His241 and His313. S-palmitoyl cysteine; in membrane form attachment occurs at residues Cys329 and Cys330. Fe cation is bound at residue His527.

The protein belongs to the carotenoid oxygenase family. Requires Fe(2+) as cofactor. Palmitoylation by LRAT regulates ligand binding specificity; the palmitoylated form (membrane form) specifically binds all-trans-retinyl-palmitate, while the soluble unpalmitoylated form binds all-trans-retinol (vitamin A). As to expression, retinal pigment epithelium specific.

It localises to the cell membrane. It catalyses the reaction an all-trans-retinyl ester + H2O = 11-cis-retinol + a fatty acid + H(+). It carries out the reaction lutein = (3R,3'S)-zeaxanthin. The enzyme catalyses all-trans-retinyl hexadecanoate + H2O = 11-cis-retinol + hexadecanoate + H(+). Critical isomerohydrolase in the retinoid cycle involved in regeneration of 11-cis-retinal, the chromophore of rod and cone opsins. Catalyzes the cleavage and isomerization of all-trans-retinyl fatty acid esters to 11-cis-retinol which is further oxidized by 11-cis retinol dehydrogenase to 11-cis-retinal for use as visual chromophore. Essential for the production of 11-cis retinal for both rod and cone photoreceptors. Also capable of catalyzing the isomerization of lutein to meso-zeaxanthin an eye-specific carotenoid. The soluble form binds vitamin A (all-trans-retinol), making it available for LRAT processing to all-trans-retinyl ester. The membrane form, palmitoylated by LRAT, binds all-trans-retinyl esters, making them available for IMH (isomerohydrolase) processing to all-cis-retinol. The soluble form is regenerated by transferring its palmitoyl groups onto 11-cis-retinol, a reaction catalyzed by LRAT. This Cynops pyrrhogaster (Japanese fire-bellied newt) protein is Retinoid isomerohydrolase (RPE65).